The following is a 904-amino-acid chain: Alanine--tRNA ligase (904 aa).

Histidine 584, histidine 588, cysteine 687, and histidine 691 together coordinate Zn(2+).

It belongs to the class-II aminoacyl-tRNA synthetase family. The cofactor is Zn(2+).

Its subcellular location is the cytoplasm. The enzyme catalyses tRNA(Ala) + L-alanine + ATP = L-alanyl-tRNA(Ala) + AMP + diphosphate. Its function is as follows. Catalyzes the attachment of alanine to tRNA(Ala) in a two-step reaction: alanine is first activated by ATP to form Ala-AMP and then transferred to the acceptor end of tRNA(Ala). Also edits incorrectly charged Ser-tRNA(Ala) and Gly-tRNA(Ala) via its editing domain. The protein is Alanine--tRNA ligase of Mycobacterium bovis (strain ATCC BAA-935 / AF2122/97).